A 412-amino-acid polypeptide reads, in one-letter code: MNIYLVGGAVRDSLLNLPVTEQDWVVVGATPEQLLKLGYQQVGKDFPVFLHPVSHEEYALARTERKSGQGYTGFTCYAAPDVTLEDDLLRRDLTVNAIARSADGEFIDPYHGKQDLENRVLRHVSDAFGEDPLRVLRVARFAARFAYLGFTIAPETMSLMSNMAQSGELSALTPERVWKETEKALKTQSPHVYFQVLRDCGALAVLFPEIERLFGVPAPEKWHPEIDTGIHTLMTLAIAAQLSPEVDIRFAALCHDLGKGLTPKEHWPHHHGHGPAGVKLVEQLCQRLRIPNPVRDLAKLVAEYHDLIHTVNKLRPETLLKLFNAIDVWRKPERLEQMIMTSEADARGRTGFENNPYPQGDYLRAAFQIANGVSIQEVVASGLQGLAIRDELQRRRQQALAEWKQTQETPLI.

Residues G8 and R11 each coordinate ATP. Residues G8 and R11 each contribute to the CTP site. 2 residues coordinate Mg(2+): E21 and D23. ATP is bound by residues R91, R137, and R140. Residues R91, R137, and R140 each contribute to the CTP site. One can recognise an HD domain in the interval 228–329; that stretch reads TGIHTLMTLA…LKLFNAIDVW (102 aa).

It belongs to the tRNA nucleotidyltransferase/poly(A) polymerase family. Bacterial CCA-adding enzyme type 1 subfamily. As to quaternary structure, monomer. Can also form homodimers and oligomers. Mg(2+) serves as cofactor. Ni(2+) is required as a cofactor.

It carries out the reaction a tRNA precursor + 2 CTP + ATP = a tRNA with a 3' CCA end + 3 diphosphate. It catalyses the reaction a tRNA with a 3' CCA end + 2 CTP + ATP = a tRNA with a 3' CCACCA end + 3 diphosphate. In terms of biological role, catalyzes the addition and repair of the essential 3'-terminal CCA sequence in tRNAs without using a nucleic acid template. Adds these three nucleotides in the order of C, C, and A to the tRNA nucleotide-73, using CTP and ATP as substrates and producing inorganic pyrophosphate. tRNA 3'-terminal CCA addition is required both for tRNA processing and repair. Also involved in tRNA surveillance by mediating tandem CCA addition to generate a CCACCA at the 3' terminus of unstable tRNAs. While stable tRNAs receive only 3'-terminal CCA, unstable tRNAs are marked with CCACCA and rapidly degraded. The sequence is that of Multifunctional CCA protein from Yersinia pseudotuberculosis serotype I (strain IP32953).